The chain runs to 407 residues: Transmembrane protein 184B (407 aa).

Residues 1-28 are compositionally biased toward low complexity; sequence MTVRGAALAPDPASPTTTTASPSVSATP. The tract at residues 1-31 is disordered; sequence MTVRGAALAPDPASPTTTTASPSVSATPEGS. 7 helical membrane passes run 40–60, 84–104, 121–141, 178–198, 214–234, 249–269, and 290–310; these read FLMTTAAQAISGFFVWTALLI, ILFIVPIYAFDSWLSLLFFTN, FVIYNFLSLCYEYLGGESAIM, LQFCVVKPLMAVSTVILQAFG, VTIIYNISVSLALYALFLFYF, FFMVKSVIFLSFWQGMLLAIL, and VAAGYQDFIICVEMFFAALAL. Positions 369–395 are disordered; sequence TLEPGPTWRGGTHSLSRSHSLSGARDN. Phosphoserine is present on residues Ser388, Ser402, and Ser403.

This sequence belongs to the TMEM184 family.

The protein resides in the membrane. In terms of biological role, may activate the MAP kinase signaling pathway. The sequence is that of Transmembrane protein 184B (Tmem184b) from Mus musculus (Mouse).